The chain runs to 465 residues: 3-isopropylmalate dehydratase large subunit (465 aa).

Positions 347, 407, and 410 each coordinate [4Fe-4S] cluster. Residues Thr-417–His-443 are disordered.

The protein belongs to the aconitase/IPM isomerase family. LeuC type 1 subfamily. Heterodimer of LeuC and LeuD. [4Fe-4S] cluster serves as cofactor.

It catalyses the reaction (2R,3S)-3-isopropylmalate = (2S)-2-isopropylmalate. The protein operates within amino-acid biosynthesis; L-leucine biosynthesis; L-leucine from 3-methyl-2-oxobutanoate: step 2/4. In terms of biological role, catalyzes the isomerization between 2-isopropylmalate and 3-isopropylmalate, via the formation of 2-isopropylmaleate. This Thermobifida fusca (strain YX) protein is 3-isopropylmalate dehydratase large subunit.